A 547-amino-acid polypeptide reads, in one-letter code: Chaperonin GroEL (547 aa).

ATP contacts are provided by residues 30–33 (TLGP), Lys-51, 87–91 (DGTTT), Gly-415, and Asp-496. The tract at residues 527–547 (KKDSPAMPGGGGMGGMGGMDF) is disordered. A compositionally biased stretch (gly residues) spans 534–547 (PGGGGMGGMGGMDF).

The protein belongs to the chaperonin (HSP60) family. As to quaternary structure, forms a cylinder of 14 subunits composed of two heptameric rings stacked back-to-back. Interacts with the co-chaperonin GroES.

The protein resides in the cytoplasm. The enzyme catalyses ATP + H2O + a folded polypeptide = ADP + phosphate + an unfolded polypeptide.. Its function is as follows. Together with its co-chaperonin GroES, plays an essential role in assisting protein folding. The GroEL-GroES system forms a nano-cage that allows encapsulation of the non-native substrate proteins and provides a physical environment optimized to promote and accelerate protein folding. This is Chaperonin GroEL from Methylocella silvestris (strain DSM 15510 / CIP 108128 / LMG 27833 / NCIMB 13906 / BL2).